We begin with the raw amino-acid sequence, 306 residues long: Methionyl-tRNA formyltransferase (306 aa).

109-112 (SILP) contributes to the (6S)-5,6,7,8-tetrahydrofolate binding site.

It belongs to the Fmt family.

It catalyses the reaction L-methionyl-tRNA(fMet) + (6R)-10-formyltetrahydrofolate = N-formyl-L-methionyl-tRNA(fMet) + (6S)-5,6,7,8-tetrahydrofolate + H(+). Functionally, attaches a formyl group to the free amino group of methionyl-tRNA(fMet). The formyl group appears to play a dual role in the initiator identity of N-formylmethionyl-tRNA by promoting its recognition by IF2 and preventing the misappropriation of this tRNA by the elongation apparatus. This chain is Methionyl-tRNA formyltransferase, found in Herpetosiphon aurantiacus (strain ATCC 23779 / DSM 785 / 114-95).